Consider the following 282-residue polypeptide: uncharacterized protein (282 aa).

In terms of domain architecture, HTH rpiR-type spans 1–77; it reads MNGLLRIRQR…LALSEALASQ (77 aa). Residues 37–56 constitute a DNA-binding region (H-T-H motif); that stretch reads SQQLANEAGVSQSSVVKFAQ. An SIS domain is found at 125 to 265; sequence CVTMLRSARR…FIALIQQDLE (141 aa).

This is an uncharacterized protein from Escherichia coli (strain K12).